Reading from the N-terminus, the 188-residue chain is Peptidyl-tRNA hydrolase (188 aa).

Phe15 provides a ligand contact to tRNA. His20 serves as the catalytic Proton acceptor. 3 residues coordinate tRNA: Tyr64, Asn66, and Asn112.

The protein belongs to the PTH family. As to quaternary structure, monomer.

The protein resides in the cytoplasm. It carries out the reaction an N-acyl-L-alpha-aminoacyl-tRNA + H2O = an N-acyl-L-amino acid + a tRNA + H(+). In terms of biological role, hydrolyzes ribosome-free peptidyl-tRNAs (with 1 or more amino acids incorporated), which drop off the ribosome during protein synthesis, or as a result of ribosome stalling. Its function is as follows. Catalyzes the release of premature peptidyl moieties from peptidyl-tRNA molecules trapped in stalled 50S ribosomal subunits, and thus maintains levels of free tRNAs and 50S ribosomes. The polypeptide is Peptidyl-tRNA hydrolase (Borrelia turicatae (strain 91E135)).